The primary structure comprises 206 residues: Probable thymidylate kinase (206 aa).

10–17 (GIDGSGKS) lines the ATP pocket.

The protein belongs to the thymidylate kinase family.

It catalyses the reaction dTMP + ATP = dTDP + ADP. In Methanosarcina acetivorans (strain ATCC 35395 / DSM 2834 / JCM 12185 / C2A), this protein is Probable thymidylate kinase.